We begin with the raw amino-acid sequence, 211 residues long: Thymidylate kinase (211 aa).

12 to 19 serves as a coordination point for ATP; sequence GIDGSGKS.

It belongs to the thymidylate kinase family.

It carries out the reaction dTMP + ATP = dTDP + ADP. Phosphorylation of dTMP to form dTDP in both de novo and salvage pathways of dTTP synthesis. The protein is Thymidylate kinase of Ruegeria pomeroyi (strain ATCC 700808 / DSM 15171 / DSS-3) (Silicibacter pomeroyi).